The primary structure comprises 973 residues: Peptidyl-glycine alpha-amidating monooxygenase (973 aa).

A signal peptide spans 1–20 (MAGRVPSLLVLLVFPSSCLA). Residues 1–494 (MAGRVPSLLV…EGTWEPEHTG (494 aa)) are peptidylglycine alpha-hydroxylating monooxygenase. Residues 21-30 (FRSPLSVFKR) constitute a propeptide that is removed on maturation. The Intragranular segment spans residues 31 to 863 (FKETTRPFSN…QKLIKEPGSG (833 aa)). Cystine bridges form between Cys42/Cys181, Cys76/Cys121, Cys109/Cys126, Cys222/Cys329, and Cys288/Cys310. Positions 102 and 103 each coordinate Cu(2+). His167, His237, His239, and Met309 together coordinate Cu(2+). The segment at 495 to 817 (DFHMEEALDW…LTEKLEHRSV (323 aa)) is peptidyl-alpha-hydroxyglycine alpha-amidating lyase. NHL repeat units lie at residues 498 to 541 (MEEA…NSFD), 567 to 608 (AAVL…LDPN), 617 to 662 (LGRS…FSPS), and 670 to 714 (GEES…FKTD). Residue Val517 participates in Ca(2+) binding. Arg530 provides a ligand contact to a protein. His582 is a Zn(2+) binding site. A Ca(2+)-binding site is contributed by Leu584. The cysteines at positions 631 and 652 are disulfide-linked. Tyr651 is a binding site for a protein. A Zn(2+)-binding site is contributed by His687. Cysteines 699 and 710 form a disulfide. Arg703 contributes to the a protein binding site. An N-linked (GlcNAc...) asparagine glycan is attached at Asn762. An NHL 5 repeat occupies 766–809 (GEIIDIFKPVRKHFDMPHDIVASEDGTVYIGDAHTNTVWKFTLT). A Zn(2+)-binding site is contributed by His783. Position 784 (Asp784) interacts with Ca(2+). A helical transmembrane segment spans residues 864–887 (VPVVLITTLLVIPVVVLLAIAIFI). 2 positions are modified to sulfotyrosine: Ile875 and Arg893. Topologically, residues 888-973 (RWKKSRAFGD…PLPALAPSSS (86 aa)) are cytoplasmic. Phosphoserine occurs at positions 918, 929, and 942. The interval 925–942 (NFFASRKGYSRKGFDRLS) is interaction with RASSF9. A disordered region spans residues 937–973 (GFDRLSTEGSDQEKEDDGSESEEEYSAPLPALAPSSS). A Phosphothreonine modification is found at Thr943. Ser946 bears the Phosphoserine; by UHMK1; in vitro mark. Residues 949 to 961 (EKEDDGSESEEEY) are compositionally biased toward acidic residues. Ser957 is modified (phosphoserine). The span at 962-973 (SAPLPALAPSSS) shows a compositional bias: low complexity.

It in the C-terminal section; belongs to the peptidyl-alpha-hydroxyglycine alpha-amidating lyase family. In the N-terminal section; belongs to the copper type II ascorbate-dependent monooxygenase family. In terms of assembly, monomer. Interacts with RASSF9. Zn(2+) serves as cofactor. Requires Cu(2+) as cofactor.

The protein resides in the cytoplasmic vesicle. It localises to the secretory vesicle membrane. It is found in the membrane. The protein localises to the secreted. The enzyme catalyses a [peptide]-C-terminal glycine + 2 L-ascorbate + O2 = a [peptide]-C-terminal (2S)-2-hydroxyglycine + 2 monodehydro-L-ascorbate radical + H2O. The catalysed reaction is a [peptide]-C-terminal (2S)-2-hydroxyglycine = a [peptide]-C-terminal amide + glyoxylate. It carries out the reaction N-dodecanoylglycine + 2 L-ascorbate + O2 = N-dodecanoyl-(2S)-hydroxyglycine + 2 monodehydro-L-ascorbate radical + H2O. It catalyses the reaction N-dodecanoyl-(2S)-hydroxyglycine = dodecanamide + glyoxylate. The enzyme catalyses N-(9Z,12Z,15Z)-octadecatrienoylglycine + 2 L-ascorbate + O2 = N-(9Z,12Z,15Z)-octadecatrienoyl-(2S)-hydroxyglycine + 2 monodehydro-L-ascorbate radical + H2O. The catalysed reaction is N-(9Z,12Z,15Z)-octadecatrienoyl-(2S)-hydroxyglycine = (9Z,12Z,15Z)-octadecatrienamide + glyoxylate. It carries out the reaction N-(9Z-octadecenoyl)glycine + 2 L-ascorbate + O2 = N-(9Z-octadecenoyl)-(2S)-hydroxyglycine + 2 monodehydro-L-ascorbate radical + H2O. It catalyses the reaction N-(9Z-octadecenoyl)-(2S)-hydroxyglycine = (9Z)-octadecenamide + glyoxylate. The enzyme catalyses N-tetradecanoylglycine + 2 L-ascorbate + O2 = N-tetradecanoyl-(2S)-hydroxyglycine + 2 monodehydro-L-ascorbate radical + H2O. The catalysed reaction is N-tetradecanoyl-(2S)-hydroxyglycine = tetradecamide + glyoxylate. It carries out the reaction N-decanoylglycine + 2 L-ascorbate + O2 = N-decanoyl-(2S)-hydroxyglycine + 2 monodehydro-L-ascorbate radical + H2O. It catalyses the reaction N-decanoyl-(2S)-hydroxyglycine = decanamide + glyoxylate. The enzyme catalyses N-octanoylglycine + 2 L-ascorbate + O2 = N-octanoyl-(2S)-hydroxyglycine + 2 monodehydro-L-ascorbate radical + H2O. The catalysed reaction is N-octanoyl-(2S)-hydroxyglycine = octanamide + glyoxylate. Its activity is regulated as follows. PAM activity is inhibited by EDTA, phenylglyoxal and diethyl pyrocarbonate. PAL activity is stimulated by cadmium and inhibited by mercury. Its function is as follows. Bifunctional enzyme that catalyzes amidation of the C-terminus of proteins. Alpha-amidation is present at the C-terminus of many endocrine hormones and neuropeptides and is required for their activity. C-terminal amidation also takes place in response to protein fragmentation triggered by oxidative stress, promoting degradation of amidated protein fragments by the proteasome. Alpha-amidation involves two sequential reactions, both of which are catalyzed by separate catalytic domains of the enzyme. The first step, catalyzed by peptidyl alpha-hydroxylating monooxygenase (PHM) domain, is the copper-, ascorbate-, and O2- dependent stereospecific hydroxylation (with S stereochemistry) at the alpha-carbon (C-alpha) of the C-terminal glycine of the peptidylglycine substrate. The second step, catalyzed by the peptidylglycine amidoglycolate lyase (PAL) domain, is the zinc-dependent cleavage of the N-C-alpha bond, producing the alpha-amidated peptide and glyoxylate. Similarly, catalyzes the two-step conversion of an N-fatty acylglycine to a primary fatty acid amide and glyoxylate. In Homo sapiens (Human), this protein is Peptidyl-glycine alpha-amidating monooxygenase.